The following is a 120-amino-acid chain: Small ribosomal subunit protein bS16 (120 aa).

The segment covering 84 to 110 (KREVKSNPEKAKPGKRAQERAAEKAQK) has biased composition (basic and acidic residues). Residues 84-120 (KREVKSNPEKAKPGKRAQERAAEKAQKAADAAAATAE) are disordered. The span at 111 to 120 (AADAAAATAE) shows a compositional bias: low complexity.

Belongs to the bacterial ribosomal protein bS16 family.

The polypeptide is Small ribosomal subunit protein bS16 (Rhizobium rhizogenes (strain K84 / ATCC BAA-868) (Agrobacterium radiobacter)).